Consider the following 600-residue polypeptide: Ligand-dependent nuclear receptor corepressor-like protein (600 aa).

3 disordered regions span residues 1–24 (MEKG…QCRS), 102–122 (SVIG…GQSN), and 495–519 (DGTS…KRGR). The span at 104 to 122 (IGSSQSTPTEELSSQGQSN) shows a compositional bias: polar residues. An HTH psq-type domain is found at 514-566 (RKKRGRYRQYDHEIMEEAIAMVMSGKMSVSKAQGIYGVPHSTLEYKVKERSGT). Positions 542-562 (VSKAQGIYGVPHSTLEYKVKE) form a DNA-binding region, H-T-H motif. Positions 581-600 (GLFNMTDSGTGSCKTSSKPV) are disordered. The segment covering 583–600 (FNMTDSGTGSCKTSSKPV) has biased composition (polar residues).

The protein localises to the nucleus. Functionally, may act as transcription activator that binds DNA elements with the sequence 5'-CCCTATCGATCGATCTCTACCT-3'. This Gallus gallus (Chicken) protein is Ligand-dependent nuclear receptor corepressor-like protein (LCORL).